The following is a 397-amino-acid chain: MIIKPRVRGFICVTTHPAGCAASVREQIAYVARRGPIERGPKKVLVIGASTGYGLAARIAAAFGVGAATLGVFFERAPADAKPGTAGWYNSAAFHDEAAARGLQATSVNGDAFSDEIKHKTIDAIRRDLGQVDLVVYSVAAPRRTHPKTGVTHQSTLKPIGHAVRLRGIDTDNEAIKETLLQPATPDEIADTVAVMGGEDWRMWIDALDAAGVLADGAKTTAFTYLGEQVTHDIYWNGSIGEAKKDLDRTVLALRGKLAARGGDARVSVLKAVVTQASSAIPMMPLYLSLLFKVMKARSTHEGCIEQVDGLLRDSLYSAQPHVDAEGRLRADRLELDPAVQARVLELWDQVTDDNLYTLTDFAGYKAEFLRLFGFGIDGVDYDAPVEPNVRIPNLIE.

Residues 48 to 53 (GASTGY), 74 to 75 (FE), 111 to 112 (DA), and 139 to 140 (VA) contribute to the NAD(+) site. Tyr-225 is a substrate binding site. The active-site Proton donor is the Tyr-235. NAD(+) contacts are provided by residues Lys-244 and 273–275 (VVT).

It belongs to the TER reductase family. As to quaternary structure, monomer.

It catalyses the reaction a 2,3-saturated acyl-[ACP] + NAD(+) = a (2E)-enoyl-[ACP] + NADH + H(+). Its pathway is lipid metabolism; fatty acid biosynthesis. Functionally, involved in the final reduction of the elongation cycle of fatty acid synthesis (FAS II). Catalyzes the reduction of a carbon-carbon double bond in an enoyl moiety that is covalently linked to an acyl carrier protein (ACP). The sequence is that of Enoyl-[acyl-carrier-protein] reductase [NADH] from Burkholderia mallei (strain NCTC 10247).